The chain runs to 600 residues: MNNRKEDMEITSHYRHLLRELNEQRQHGVLCDACVVVEGKVFKAHKNVLLGSSRYFKTLYCQVQKTSDQATVTHLDIVTAQGFKAIIDFMYSAHLALTSRNVIEVMSAASFLQMTDIVQACHDFIKAALDISIKSDASDELSEFEIGTPASNSTEALISAVMAGRSISPWLARRTSPANSSGDSAIASCHEGGSSYGKEDQEPKADGPDDVSSQSLWPGDVGYGSLRIKEEQISPSHYGGSELPSSKDTAIQNSLSEQGSGDGWQPTGRRKNRKNKETVRHITQQVEEDSQAGSPVPSFLPTSGWPFSSRDSNVDLTVTEASSLDSRGERAELYAHIDEGLLGGETSYLGPPLTPEKEEALHQATAVANLRAALMSKNSLLSLKADVLGDDGSLLFEYLPKGAHSLSLNEFTVIRKKFKCPYCSFSAMHQCILKRHMRSHTGERPYPCEICGKKFTRREHMKRHTLVHSKDKKYVCKVCSRVFMSAASVGIKHGSRRHGVCADCAGRGVGTPLDHGGGGEGSPEALFAGEGPYLEDPDDPRGEAEEELVEDEDEDVAKWKDDVGLAHEDALLGDDKDDEDSPQGPHSPSGEPDKDFAWIS.

Positions 31-99 constitute a BTB domain; the sequence is CDACVVVEGK…MYSAHLALTS (69 aa). The interval 173 to 222 is disordered; the sequence is RRTSPANSSGDSAIASCHEGGSSYGKEDQEPKADGPDDVSSQSLWPGDVG. Residues 197-207 are compositionally biased toward basic and acidic residues; that stretch reads GKEDQEPKADG. Lys229 is covalently cross-linked (Glycyl lysine isopeptide (Lys-Gly) (interchain with G-Cter in SUMO2)). Ser234 carries the post-translational modification Phosphoserine. The segment at 235–278 is disordered; that stretch reads PSHYGGSELPSSKDTAIQNSLSEQGSGDGWQPTGRRKNRKNKET. The span at 243-259 shows a compositional bias: polar residues; the sequence is LPSSKDTAIQNSLSEQG. 2 consecutive C2H2-type zinc fingers follow at residues 418–436 and 446–468; these read FKCP…LKRH and YPCE…TLVH. The segment at 513 to 600 is disordered; sequence LDHGGGGEGS…EPDKDFAWIS (88 aa). Positions 533–555 are enriched in acidic residues; that stretch reads YLEDPDDPRGEAEEELVEDEDED. Basic and acidic residues-rich tracts occupy residues 556–574 and 591–600; these read VAKW…LLGD and EPDKDFAWIS.

Post-translationally, sumoylated. Desumoylation by DESI1 reverses transcriptional repression activity.

The protein resides in the nucleus. Functions as a transcriptional repressor for PRDM1. This is Zinc finger and BTB domain-containing protein 46 (Zbtb46) from Mus musculus (Mouse).